Reading from the N-terminus, the 625-residue chain is ATP-dependent rRNA helicase spb4 (625 aa).

Positions 14–42 (WDALTPSLAEWILDAIKSMGFEKMTPVQA) match the Q motif motif. The region spanning 45–246 (IPLFMGNKDV…RVGLRNPVKI (202 aa)) is the Helicase ATP-binding domain. An ATP-binding site is contributed by 58–65 (AVTGSGKT). A DEAD box motif is present at residues 194-197 (DEAD). A Helicase C-terminal domain is found at 278–436 (ALLSLLSQLQ…TTDDAAKILI (159 aa)). A disordered region spans residues 550-597 (KKQREAWSQKHEKQDLKELKREKKKRKREIERLDKMTDEEKRVEQEKE). Composition is skewed to basic and acidic residues over residues 553 to 570 (REAW…ELKR) and 577 to 597 (REIE…QEKE). Positions 557-614 (SQKHEKQDLKELKREKKKRKREIERLDKMTDEEKRVEQEKERELQALIEQVKRRKIED) form a coiled coil.

This sequence belongs to the DEAD box helicase family. DDX55/SPB4 subfamily. In terms of assembly, component of pre-60S ribosomal complexes.

It is found in the nucleus. The protein resides in the nucleolus. The catalysed reaction is ATP + H2O = ADP + phosphate + H(+). In terms of biological role, ATP-binding RNA helicase involved in the biogenesis of 60S ribosomal subunits. Binds 90S pre-ribosomal particles and dissociates from pre-60S ribosomal particles after processing of 27SB pre-rRNA. Required for the normal formation of 18S rRNA through the processing of pre-rRNAs at sites A0, A1 and A2, and the normal formation of 25S and 5.8S rRNAs through the processing of pre-rRNAs at sites C1 and C2. This chain is ATP-dependent rRNA helicase spb4, found in Sclerotinia sclerotiorum (strain ATCC 18683 / 1980 / Ss-1) (White mold).